The following is a 315-amino-acid chain: Malate dehydrogenase (315 aa).

NAD(+)-binding positions include 10 to 15 (GSGFTG) and aspartate 34. The substrate site is built by arginine 85 and arginine 91. NAD(+) is bound by residues asparagine 98 and 121–123 (LTN). Substrate is bound by residues asparagine 123 and arginine 154. Histidine 178 acts as the Proton acceptor in catalysis.

It belongs to the LDH/MDH superfamily. MDH type 3 family.

It catalyses the reaction (S)-malate + NAD(+) = oxaloacetate + NADH + H(+). Its function is as follows. Catalyzes the reversible oxidation of malate to oxaloacetate. This Symbiobacterium thermophilum (strain DSM 24528 / JCM 14929 / IAM 14863 / T) protein is Malate dehydrogenase.